The sequence spans 310 residues: Pyrimidine-specific ribonucleoside hydrolase RihA (310 aa).

Histidine 240 is an active-site residue.

This sequence belongs to the IUNH family. RihA subfamily.

Its function is as follows. Hydrolyzes cytidine or uridine to ribose and cytosine or uracil, respectively. This Photobacterium profundum (strain SS9) protein is Pyrimidine-specific ribonucleoside hydrolase RihA.